A 226-amino-acid polypeptide reads, in one-letter code: MSNEDLKLKVAKEAVKLVKDGMVIGLGTGSTAALFIRELGNRIREEELTVFGIPTSFEAKMLAMQYEIPLVTLDEYDVDIAFDGADEVEETTLFLIKGGGGCHTQEKIVDYNANEFVVLVDESKLVKKLGEKFPIPVEVIPSAYRVVIRALSEMGGEAVIRLGDRKRGPVITDNGNMIIDVFMNIDDAIELEKEINNIPGVVENGIFTKVDKVLVGTKKGVKTLKK.

Residues 28–31 (TGST), 83–86 (DGAD), and 97–100 (KGGG) contribute to the substrate site. Catalysis depends on Glu-106, which acts as the Proton acceptor. Residue Lys-124 participates in substrate binding.

Belongs to the ribose 5-phosphate isomerase family. As to quaternary structure, homotetramer.

It carries out the reaction aldehydo-D-ribose 5-phosphate = D-ribulose 5-phosphate. It functions in the pathway carbohydrate biosynthesis; D-ribose 5-phosphate biosynthesis. Functionally, catalyzes the reversible conversion of ribose-5-phosphate to ribulose 5-phosphate. In Methanocaldococcus jannaschii (strain ATCC 43067 / DSM 2661 / JAL-1 / JCM 10045 / NBRC 100440) (Methanococcus jannaschii), this protein is Ribose-5-phosphate isomerase A.